The chain runs to 546 residues: 2-isopropylmalate synthase (546 aa).

The Pyruvate carboxyltransferase domain maps to 8 to 271 (ILIFDTTLRD…NSFFKRNPDS (264 aa)). Asp17, His208, His210, and Asn244 together coordinate Mn(2+). Residues 408–546 (QLSLVQVSCG…NNTYISNPAN (139 aa)) are regulatory domain.

The protein belongs to the alpha-IPM synthase/homocitrate synthase family. LeuA type 1 subfamily. Homodimer. The cofactor is Mn(2+).

The protein localises to the cytoplasm. It catalyses the reaction 3-methyl-2-oxobutanoate + acetyl-CoA + H2O = (2S)-2-isopropylmalate + CoA + H(+). It functions in the pathway amino-acid biosynthesis; L-leucine biosynthesis; L-leucine from 3-methyl-2-oxobutanoate: step 1/4. Functionally, catalyzes the condensation of the acetyl group of acetyl-CoA with 3-methyl-2-oxobutanoate (2-ketoisovalerate) to form 3-carboxy-3-hydroxy-4-methylpentanoate (2-isopropylmalate). This is 2-isopropylmalate synthase from Prochlorococcus marinus (strain MIT 9301).